The chain runs to 715 residues: MKNKNRGFFRSSLSYAFVILAVIFLIYSFFGRSDGSVKHLSTTTFLKELKNNKIKDFTIQPGDSGVYTIAGDFKKAQKSSSSSSSTTTLLSGYQSSVTKFTAYVLPNNSSLKQITTAAQKAGVAVNPKPAASNFWGSMLTLILPTLIMFALLYWMLIGSQRGQGGSGGPGGIMSFGRSKAKPADPKQNKIRFADVAGEEEEKQELVEVVEFLKDPKKFTKLGARIPKGVLLEGPPGTGKTLLAKAVAGEAKTPFFSISGSDFVEMFVGVGASRVRDLFENAKKSAPSIIFIDEIDAVGRRRGAGMGGGNDEREQTLNQILIEMDGFEGSEGVIVLASTNRSDVLDPALLRSGRFDRKILVGAPDVKGREAILRVHAKNKPLAADVDLKVIAQQTPGFVGADLENLLNEAALLAARNDEKAVTAADIDEAEDRVIAGPAKKDRKTTQDERETVAYHEAGHAIVGLVLNDAQVVRKVTIVPRGRAGGYALMMPKDERYLMSEKDAKEELAGLMGGRAAEILINHVASSGASNDFQQATQIAREMVTQYGMSDKLGMVQLEGSSNVFVGDPNNPNPPYSQKTSELIDEEVRRLTNEAYKRAVDIIKSHPKQHKAIAEALLKYETLDEAQIRSLFETGEIPSDLVKDSQRPARPLSYEESKAALKKNGAVDNKEAEDELKRTKMIRKMKMIPSRVPIQLQKRRQPRRLQLLDAVNNKFD.

The Cytoplasmic portion of the chain corresponds to 1-10 (MKNKNRGFFR). The chain crosses the membrane as a helical span at residues 11–31 (SSLSYAFVILAVIFLIYSFFG). The Extracellular portion of the chain corresponds to 32-137 (RSDGSVKHLS…KPAASNFWGS (106 aa)). A helical transmembrane segment spans residues 138 to 158 (MLTLILPTLIMFALLYWMLIG). The Cytoplasmic portion of the chain corresponds to 159-715 (SQRGQGGSGG…LLDAVNNKFD (557 aa)). Positions 167–187 (GGPGGIMSFGRSKAKPADPKQ) are disordered. 233–240 (GPPGTGKT) provides a ligand contact to ATP. A Zn(2+)-binding site is contributed by H455. The active site involves E456. Zn(2+) contacts are provided by H459 and D531.

The protein in the central section; belongs to the AAA ATPase family. In the C-terminal section; belongs to the peptidase M41 family. In terms of assembly, homohexamer. Zn(2+) serves as cofactor.

It is found in the cell membrane. Acts as a processive, ATP-dependent zinc metallopeptidase for both cytoplasmic and membrane proteins. Plays a role in the quality control of integral membrane proteins. In terms of biological role, can complement an E.coli ftsH disruption mutant. This Oenococcus oeni (Leuconostoc oenos) protein is ATP-dependent zinc metalloprotease FtsH.